A 338-amino-acid polypeptide reads, in one-letter code: Anthranilate phosphoribosyltransferase (338 aa).

5-phospho-alpha-D-ribose 1-diphosphate is bound by residues glycine 80, 83-84 (GD), threonine 88, 90-93 (NIST), 108-116 (KHGNRAVSS), and serine 120. Glycine 80 is an anthranilate binding site. Position 92 (serine 92) interacts with Mg(2+). Asparagine 111 is an anthranilate binding site. Arginine 166 provides a ligand contact to anthranilate. Mg(2+)-binding residues include aspartate 225 and glutamate 226.

Belongs to the anthranilate phosphoribosyltransferase family. In terms of assembly, homodimer. Mg(2+) is required as a cofactor.

It carries out the reaction N-(5-phospho-beta-D-ribosyl)anthranilate + diphosphate = 5-phospho-alpha-D-ribose 1-diphosphate + anthranilate. It participates in amino-acid biosynthesis; L-tryptophan biosynthesis; L-tryptophan from chorismate: step 2/5. Catalyzes the transfer of the phosphoribosyl group of 5-phosphorylribose-1-pyrophosphate (PRPP) to anthranilate to yield N-(5'-phosphoribosyl)-anthranilate (PRA). This Thermoanaerobacter sp. (strain X514) protein is Anthranilate phosphoribosyltransferase.